We begin with the raw amino-acid sequence, 307 residues long: Malate dehydrogenase (307 aa).

Residues 8 to 13 (GAGNVG) and Asp-32 contribute to the NAD(+) site. Arg-81 and Arg-87 together coordinate substrate. NAD(+) contacts are provided by residues Asn-94 and 117-119 (VSN). Residues Asn-119 and Arg-150 each contribute to the substrate site. The active-site Proton acceptor is His-174.

It belongs to the LDH/MDH superfamily. MDH type 3 family.

It carries out the reaction (S)-malate + NAD(+) = oxaloacetate + NADH + H(+). In terms of biological role, catalyzes the reversible oxidation of malate to oxaloacetate. The chain is Malate dehydrogenase from Dehalococcoides mccartyi (strain CBDB1).